We begin with the raw amino-acid sequence, 308 residues long: Lipoyl synthase (308 aa).

[4Fe-4S] cluster contacts are provided by cysteine 48, cysteine 53, cysteine 59, cysteine 74, cysteine 78, cysteine 81, and serine 287. A Radical SAM core domain is found at tryptophan 60 to phenylalanine 277.

The protein belongs to the radical SAM superfamily. Lipoyl synthase family. [4Fe-4S] cluster serves as cofactor.

The protein resides in the cytoplasm. The enzyme catalyses [[Fe-S] cluster scaffold protein carrying a second [4Fe-4S](2+) cluster] + N(6)-octanoyl-L-lysyl-[protein] + 2 oxidized [2Fe-2S]-[ferredoxin] + 2 S-adenosyl-L-methionine + 4 H(+) = [[Fe-S] cluster scaffold protein] + N(6)-[(R)-dihydrolipoyl]-L-lysyl-[protein] + 4 Fe(3+) + 2 hydrogen sulfide + 2 5'-deoxyadenosine + 2 L-methionine + 2 reduced [2Fe-2S]-[ferredoxin]. Its pathway is protein modification; protein lipoylation via endogenous pathway; protein N(6)-(lipoyl)lysine from octanoyl-[acyl-carrier-protein]: step 2/2. Functionally, catalyzes the radical-mediated insertion of two sulfur atoms into the C-6 and C-8 positions of the octanoyl moiety bound to the lipoyl domains of lipoate-dependent enzymes, thereby converting the octanoylated domains into lipoylated derivatives. In Chlamydia muridarum (strain MoPn / Nigg), this protein is Lipoyl synthase.